Here is a 122-residue protein sequence, read N- to C-terminus: Large ribosomal subunit protein uL18 (122 aa).

The protein belongs to the universal ribosomal protein uL18 family. In terms of assembly, part of the 50S ribosomal subunit; part of the 5S rRNA/L5/L18/L25 subcomplex. Contacts the 5S and 23S rRNAs.

Its function is as follows. This is one of the proteins that bind and probably mediate the attachment of the 5S RNA into the large ribosomal subunit, where it forms part of the central protuberance. The sequence is that of Large ribosomal subunit protein uL18 from Synechococcus sp. (strain JA-3-3Ab) (Cyanobacteria bacterium Yellowstone A-Prime).